Reading from the N-terminus, the 332-residue chain is D-glutamate N-acetyltransferase (332 aa).

This sequence belongs to the N-acetyltransferase DgcN family.

The catalysed reaction is D-glutamate + acetyl-CoA = N-acetyl-D-glutamate + CoA + H(+). It catalyses the reaction D-aspartate + acetyl-CoA = N-acetyl-D-aspartate + CoA + H(+). The enzyme catalyses D-glutamine + acetyl-CoA = N-acetyl-D-glutamine + CoA + H(+). It participates in amino-acid degradation. Its function is as follows. N-acetyltransferase involved in a deamination-independent D-glutamate degradation pathway, named the DgcN-DgcA pathway. Catalyzes the transfer of the acetyl moiety from acetyl-CoA to D-glutamate to generate N-acetyl-D-glutamate. Can also acetylate D-aspartate and D-glutamine, with lower efficiency. Has low activity with D-asparagine. Cannot use succinyl-CoA. The sequence is that of D-glutamate N-acetyltransferase from Pseudoalteromonas sp.